Reading from the N-terminus, the 311-residue chain is MPLRMIFMGTPEFSVPTLLALAGAGHEIAAVYTQPPRPGGRRGLDLQKSPVHQAAERLGIPVLTPANFKDAADRQTFRDFGADVAVVVAYGLLLPEEILSGTRYGCYNGHASLLPRWRGAAPIQRAIMAGDRETGMMVMKMDKGLDTGPVALAQSVPIDGMMRAGELHDRLMQVGAVLMTEAMARLESGELPLAPQAQEGVAYAAKISKEETRIDFSRPAAEVHNHIRGLSPFPGAWFELDIAGRRERVKVLASEMSEGEGDPGEVLDHTLGIACGEGAVRLTRLQRAGGKALAAADFLRGTPIAAGARIA.

112-115 lines the (6S)-5,6,7,8-tetrahydrofolate pocket; that stretch reads SLLP.

This sequence belongs to the Fmt family.

It catalyses the reaction L-methionyl-tRNA(fMet) + (6R)-10-formyltetrahydrofolate = N-formyl-L-methionyl-tRNA(fMet) + (6S)-5,6,7,8-tetrahydrofolate + H(+). In terms of biological role, attaches a formyl group to the free amino group of methionyl-tRNA(fMet). The formyl group appears to play a dual role in the initiator identity of N-formylmethionyl-tRNA by promoting its recognition by IF2 and preventing the misappropriation of this tRNA by the elongation apparatus. This chain is Methionyl-tRNA formyltransferase, found in Rhizobium meliloti (strain 1021) (Ensifer meliloti).